The sequence spans 491 residues: NADH-quinone oxidoreductase subunit N (491 aa).

Helical transmembrane passes span 6–26 (TLAP…INWI), 37–57 (VAYP…GMNA), 69–89 (LVVI…GLFV), 103–123 (MFAG…IVMI), 128–148 (FLTL…LVAL), 163–183 (FVLG…MYGA), 206–226 (LAFG…AAPF), 238–258 (PTAV…ALFI), 273–293 (QMML…TAIV), 301–321 (LAYS…SGVV), 335–355 (AMFY…IILL), 379–399 (FAFL…TVGF), 413–433 (GMTW…FYYL), and 458–478 (SMLS…AALM).

It belongs to the complex I subunit 2 family. In terms of assembly, NDH-1 is composed of 14 different subunits. Subunits NuoA, H, J, K, L, M, N constitute the membrane sector of the complex.

It is found in the cell inner membrane. It catalyses the reaction a quinone + NADH + 5 H(+)(in) = a quinol + NAD(+) + 4 H(+)(out). NDH-1 shuttles electrons from NADH, via FMN and iron-sulfur (Fe-S) centers, to quinones in the respiratory chain. The immediate electron acceptor for the enzyme in this species is believed to be ubiquinone. Couples the redox reaction to proton translocation (for every two electrons transferred, four hydrogen ions are translocated across the cytoplasmic membrane), and thus conserves the redox energy in a proton gradient. This chain is NADH-quinone oxidoreductase subunit N, found in Cupriavidus taiwanensis (strain DSM 17343 / BCRC 17206 / CCUG 44338 / CIP 107171 / LMG 19424 / R1) (Ralstonia taiwanensis (strain LMG 19424)).